Consider the following 25-residue polypeptide: Grammistin Pp 3 (25 aa).

It belongs to the grammistin family. Group 3 subfamily. In terms of assembly, exists as aggregates of 3-4 molecules. As to expression, expressed by the skin glands.

It localises to the secreted. Thanks to its abundant amphiphilic alpha-helices, it may integrate into membrane phospholipids, leading to lysis of the membrane. Has hemolytic activity. Has antibacterial activity with a broad spectrum against various species of bacteria including both Gram-positive and Gram-negative groups. Also has ichthyotoxic activity. The polypeptide is Grammistin Pp 3 (Pogonoperca punctata (Clown grouper)).